We begin with the raw amino-acid sequence, 65 residues long: Large ribosomal subunit protein bL35 (65 aa).

Residues 1-15 (MPKMKTKKSASKRFT) show a composition bias toward basic residues. The segment at 1 to 27 (MPKMKTKKSASKRFTARPNGSFKRGQA) is disordered.

The protein belongs to the bacterial ribosomal protein bL35 family.

The polypeptide is Large ribosomal subunit protein bL35 (Cupriavidus pinatubonensis (strain JMP 134 / LMG 1197) (Cupriavidus necator (strain JMP 134))).